The primary structure comprises 202 residues: Guanylate kinase (202 aa).

The Guanylate kinase-like domain maps to 3 to 181 (GNLFIITAPS…ALEDLRAIIR (179 aa)). 10–17 (APSGAGKT) is a binding site for ATP.

It belongs to the guanylate kinase family.

The protein resides in the cytoplasm. The catalysed reaction is GMP + ATP = GDP + ADP. Essential for recycling GMP and indirectly, cGMP. The chain is Guanylate kinase from Methylobacillus flagellatus (strain ATCC 51484 / DSM 6875 / VKM B-1610 / KT).